The sequence spans 276 residues: Shikimate dehydrogenase (NADP(+)) (276 aa).

Shikimate-binding positions include 18–20 and Thr-65; that span reads SKS. Lys-69 (proton acceptor) is an active-site residue. NADP(+) is bound at residue Glu-81. Residues Asn-90 and Asp-106 each contribute to the shikimate site. Residues 130-134, 154-159, and Met-217 each bind NADP(+); these read GAGGA and NRTSSK. Tyr-219 is a shikimate binding site. Gly-241 contributes to the NADP(+) binding site.

This sequence belongs to the shikimate dehydrogenase family. In terms of assembly, homodimer.

The enzyme catalyses shikimate + NADP(+) = 3-dehydroshikimate + NADPH + H(+). Its pathway is metabolic intermediate biosynthesis; chorismate biosynthesis; chorismate from D-erythrose 4-phosphate and phosphoenolpyruvate: step 4/7. Functionally, involved in the biosynthesis of the chorismate, which leads to the biosynthesis of aromatic amino acids. Catalyzes the reversible NADPH linked reduction of 3-dehydroshikimate (DHSA) to yield shikimate (SA). The polypeptide is Shikimate dehydrogenase (NADP(+)) (Vibrio atlanticus (strain LGP32) (Vibrio splendidus (strain Mel32))).